Here is a 191-residue protein sequence, read N- to C-terminus: Corticoliberin (191 aa).

The signal sequence occupies residues 1-24 (MRLPLLVSAGVLLVALLPCPPCRA). The propeptide occupies 25-148 (LLSRGPVLGA…RQEAPERERR (124 aa)). Positions 115 to 153 (PLPRRPLDSPSGPAERGAENALSSRQEAPERERRSEEPP) are disordered. Residues 141–151 (EAPERERRSEE) show a composition bias toward basic and acidic residues. Ile-189 carries the isoleucine amide modification.

Belongs to the sauvagine/corticotropin-releasing factor/urotensin I family. Interacts (via C-terminus) with CRFR1 (via N-terminal extracellular domain). In terms of tissue distribution, produced by the hypothalamus.

The protein resides in the secreted. In terms of biological role, hormone regulating the release of corticotropin from pituitary gland. Induces NLRP6 in intestinal epithelial cells, hence may influence gut microbiota profile. The sequence is that of Corticoliberin (CRH) from Sus scrofa (Pig).